We begin with the raw amino-acid sequence, 95 residues long: MSFKFEAEVRSAQGKGASRRLRHNGQVPAIIYGGNAEPVSIILDHDKVNNAQAHDAFYNEVLTIVVAGKEEQVKVQAIQRHPTKPKLVHLDFKRV.

It belongs to the bacterial ribosomal protein bL25 family. In terms of assembly, part of the 50S ribosomal subunit; part of the 5S rRNA/L5/L18/L25 subcomplex. Contacts the 5S rRNA. Binds to the 5S rRNA independently of L5 and L18.

In terms of biological role, this is one of the proteins that binds to the 5S RNA in the ribosome where it forms part of the central protuberance. The protein is Large ribosomal subunit protein bL25 of Actinobacillus pleuropneumoniae serotype 5b (strain L20).